Reading from the N-terminus, the 92-residue chain is MARTVNCVHLNKEADGLDFQLYPGDLGKRIFDNISKEAWGLWQKKQTMLINEKKLNMMNVDDRKFLEAQMTSFLFEGKDVEIEGFVPEKDQD.

This sequence belongs to the Fe(2+)-trafficking protein family.

Functionally, could be a mediator in iron transactions between iron acquisition and iron-requiring processes, such as synthesis and/or repair of Fe-S clusters in biosynthetic enzymes. The protein is Probable Fe(2+)-trafficking protein of Shewanella oneidensis (strain ATCC 700550 / JCM 31522 / CIP 106686 / LMG 19005 / NCIMB 14063 / MR-1).